The sequence spans 137 residues: Gonadotropin subunit beta-1 (137 aa).

The first 24 residues, 1-24 (MYCTHLRMLQLVVMATLWVTPVRA), serve as a signal peptide directing secretion. Intrachain disulfides connect Cys32/Cys78, Cys46/Cys93, Cys55/Cys108, Cys59/Cys110, and Cys113/Cys120. N-linked (GlcNAc...) asparagine glycosylation occurs at Asn36.

It belongs to the glycoprotein hormones subunit beta family. Heterodimer of an alpha and a beta chain.

The protein resides in the secreted. In terms of biological role, involved in gametogenesis and steroidogenesis. The protein is Gonadotropin subunit beta-1 (cgba) of Coregonus autumnalis (Arctic cisco).